A 212-amino-acid polypeptide reads, in one-letter code: Riboflavin kinase (212 aa).

Residues 1–87 (MKMKTLFLLI…YEEISTALYS (87 aa)) form an H-T-H motif-like region. Residues 88-212 (GFIVGEVISG…DGDKVRIEVV (125 aa)) form a riboflavin kinase region. CDP is bound at residue 97-102 (GIGEGA). Residues Thr-124 and Asn-126 each contribute to the Mg(2+) site. Residues Thr-180 and Glu-188 each coordinate FMN. CDP is bound at residue 193-196 (VKLR).

The protein belongs to the archaeal riboflavin kinase family. Mg(2+) serves as cofactor.

It carries out the reaction riboflavin + CTP = CDP + FMN + H(+). It participates in cofactor biosynthesis; FMN biosynthesis; FMN from riboflavin (CTP route): step 1/1. Its function is as follows. Catalyzes the CTP-dependent phosphorylation of riboflavin (vitamin B2) to form flavin mononucleotide (FMN). The chain is Riboflavin kinase (ribK) from Pyrococcus abyssi (strain GE5 / Orsay).